The primary structure comprises 224 residues: Type II restriction enzyme BstVI (224 aa).

It belongs to the XhoI type II restriction endonuclease family.

The catalysed reaction is Endonucleolytic cleavage of DNA to give specific double-stranded fragments with terminal 5'-phosphates.. A P subtype restriction enzyme that recognizes the double-stranded sequence 5'-CTCGAG-3' and cleaves after C-1. This chain is Type II restriction enzyme BstVI, found in Geobacillus stearothermophilus (Bacillus stearothermophilus).